The following is a 372-amino-acid chain: Dof zinc finger protein DOF5.6 (372 aa).

The Dof-type zinc-finger motif lies at 73–127 (QKCPRCESTHTKFCYYNNYSLSQPRYFCKTCRRYWTKGGTLRNIPVGGGCRKNKK). Zn(2+)-binding residues include cysteine 75, cysteine 78, cysteine 100, and cysteine 103. Residues 117–146 (PVGGGCRKNKKPSSSNSSSSTSSGKKPSNI) are disordered. Residues 128–145 (PSSSNSSSSTSSGKKPSN) are compositionally biased toward low complexity.

The PEAR proteins (e.g. DOF2.4, DOF5.1, DOF3.2, DOF1.1, DOF5.6 and DOF5.3) form a short-range concentration gradient that peaks at protophloem sieve elements (PSE). Preferentially expressed in the vasculature of all organs, including seedlings, roots, stems, buds, leaves, flowers and siliques, and particularly in the cambium, phloem and interfascicular parenchyma cells of inflorescence stems.

It localises to the nucleus. In terms of biological role, transcription factor that binds specifically to a 5'-AA[AG]G-3' consensus core sequence. Promotes expression. The PEAR proteins (e.g. DOF2.4, DOF5.1, DOF3.2, DOF1.1, DOF5.6 and DOF5.3) activate gene expression that promotes radial growth of protophloem sieve elements. Involved in the regulation of interfascicular cambium formation and vascular tissue development, particularly at a very early stage during inflorescence stem development; promotes both cambium activity and phloem specification, but prevents xylem specification. The polypeptide is Dof zinc finger protein DOF5.6 (Arabidopsis thaliana (Mouse-ear cress)).